A 236-amino-acid chain; its full sequence is tRNA1(Val) (adenine(37)-N6)-methyltransferase (236 aa).

The protein belongs to the methyltransferase superfamily. tRNA (adenine-N(6)-)-methyltransferase family.

Its subcellular location is the cytoplasm. The enzyme catalyses adenosine(37) in tRNA1(Val) + S-adenosyl-L-methionine = N(6)-methyladenosine(37) in tRNA1(Val) + S-adenosyl-L-homocysteine + H(+). Specifically methylates the adenine in position 37 of tRNA(1)(Val) (anticodon cmo5UAC). In Actinobacillus pleuropneumoniae serotype 5b (strain L20), this protein is tRNA1(Val) (adenine(37)-N6)-methyltransferase.